Reading from the N-terminus, the 327-residue chain is Ornithine carbamoyltransferase (327 aa).

Carbamoyl phosphate-binding positions include 56 to 59 (STRT), Gln83, Arg107, and 134 to 137 (HPTQ). L-ornithine is bound by residues Asn166, Asp230, and 234-235 (SM). Residues 269 to 270 (CL) and Arg314 each bind carbamoyl phosphate.

Belongs to the aspartate/ornithine carbamoyltransferase superfamily. OTCase family.

The protein localises to the cytoplasm. It carries out the reaction carbamoyl phosphate + L-ornithine = L-citrulline + phosphate + H(+). It participates in amino-acid degradation; L-arginine degradation via ADI pathway; carbamoyl phosphate from L-arginine: step 2/2. Reversibly catalyzes the transfer of the carbamoyl group from carbamoyl phosphate (CP) to the N(epsilon) atom of ornithine (ORN) to produce L-citrulline. The chain is Ornithine carbamoyltransferase from Borreliella burgdorferi (strain ZS7) (Borrelia burgdorferi).